The sequence spans 1026 residues: Unconventional myosin-Ic (1026 aa).

Residue Met-1 is modified to N-acetylmethionine. One can recognise a Myosin motor domain in the interval 12-695 (GVQDFLLLEN…TLFITEDALE (684 aa)). ATP contacts are provided by residues Asn-53, Tyr-61, 104–113 (SGESGAGKTE), and 157–161 (NDNSS). Lys-349 bears the N6-methyllysine mark. The tract at residues 572–594 (LAKLMDILMSKEPSYVRCIKPND) is actin-binding. 2 IQ domains span residues 698–727 (KQTI…AVIV) and 721–750 (IRHA…AADT). Positions 849–1024 (KDGYSRSVPK…NGHLSVTTPR (176 aa)) constitute a TH1 domain.

The protein belongs to the TRAFAC class myosin-kinesin ATPase superfamily. Myosin family. Interacts (via its IQ motifs) with calm.

The protein resides in the cytoplasm. It is found in the cell cortex. It localises to the cell projection. Its subcellular location is the ruffle membrane. The protein localises to the cytoplasmic vesicle. The protein resides in the stereocilium membrane. Functionally, myosins are actin-based motor molecules with ATPase activity. Unconventional myosins serve in intracellular movements. Their highly divergent tails are presumed to bind to membranous compartments, which would be moved relative to actin filaments. The protein is Unconventional myosin-Ic (myo1c) of Danio rerio (Zebrafish).